Reading from the N-terminus, the 748-residue chain is Photosystem I P700 chlorophyll a apoprotein A1 (748 aa).

Helical transmembrane passes span 70-93 (VFSA…FHGA), 156-179 (LYST…YHYH), 195-219 (LNHH…HVSL), 291-309 (TAHH…GHQY), 346-369 (WHAQ…HHMY), 385-411 (LSLF…IFLV), 433-455 (AIIS…LYIH), and 530-548 (FLVH…LILL). Residues Cys-572 and Cys-581 each coordinate [4Fe-4S] cluster. 2 helical membrane passes run 588 to 609 (HVFL…HFSW) and 662 to 684 (LSAY…MFLF). His-673 contacts chlorophyll a'. Residues Met-681 and Tyr-689 each contribute to the chlorophyll a site. Trp-690 is a binding site for phylloquinone. A helical membrane pass occupies residues 722-742 (AVGVAHYLLGGIATTWAFFLA).

It belongs to the PsaA/PsaB family. In terms of assembly, the PsaA/B heterodimer binds the P700 chlorophyll special pair and subsequent electron acceptors. PSI consists of a core antenna complex that captures photons, and an electron transfer chain that converts photonic excitation into a charge separation. The eukaryotic PSI reaction center is composed of at least 11 subunits. P700 is a chlorophyll a/chlorophyll a' dimer, A0 is one or more chlorophyll a, A1 is one or both phylloquinones and FX is a shared 4Fe-4S iron-sulfur center. serves as cofactor.

The protein localises to the plastid. It localises to the chloroplast thylakoid membrane. It catalyses the reaction reduced [plastocyanin] + hnu + oxidized [2Fe-2S]-[ferredoxin] = oxidized [plastocyanin] + reduced [2Fe-2S]-[ferredoxin]. Its function is as follows. PsaA and PsaB bind P700, the primary electron donor of photosystem I (PSI), as well as the electron acceptors A0, A1 and FX. PSI is a plastocyanin-ferredoxin oxidoreductase, converting photonic excitation into a charge separation, which transfers an electron from the donor P700 chlorophyll pair to the spectroscopically characterized acceptors A0, A1, FX, FA and FB in turn. Oxidized P700 is reduced on the lumenal side of the thylakoid membrane by plastocyanin. This chain is Photosystem I P700 chlorophyll a apoprotein A1, found in Chaetosphaeridium globosum (Charophycean green alga).